The following is a 310-amino-acid chain: Glutarate 2-hydroxylase (310 aa).

3 residues coordinate Fe cation: histidine 160, aspartate 162, and histidine 277.

This sequence belongs to the glutarate hydroxylase family. In terms of assembly, homotetramer. Fe(2+) serves as cofactor.

The catalysed reaction is glutarate + 2-oxoglutarate + O2 = (S)-2-hydroxyglutarate + succinate + CO2. It participates in amino-acid degradation. Acts as an alpha-ketoglutarate-dependent dioxygenase catalyzing hydroxylation of glutarate (GA) to L-2-hydroxyglutarate (L2HG). Functions in a L-lysine degradation pathway that proceeds via cadaverine, glutarate and L-2-hydroxyglutarate. The protein is Glutarate 2-hydroxylase of Shigella flexneri.